The sequence spans 178 residues: Probable DNA-directed RNA polymerase subunit delta (178 aa).

The 68-residue stretch at 14–81 folds into the HTH HARE-type domain; it reads LSMIEVAHAI…GENTWGLRTW (68 aa). Over residues 120–143 the composition is skewed to acidic residues; the sequence is DDDVIDYDSDDPEDEEVEAEDTTS. Positions 120–178 are disordered; it reads DDDVIDYDSDDPEDEEVEAEDTTSDDAPAFEDLSNDDDTDVLPDGIEGQLSELNEDDEN.

It belongs to the RpoE family. As to quaternary structure, RNAP is composed of a core of 2 alpha, a beta and a beta' subunits. The core is associated with a delta subunit and one of several sigma factors.

Functionally, participates in both the initiation and recycling phases of transcription. In the presence of the delta subunit, RNAP displays an increased specificity of transcription, a decreased affinity for nucleic acids, and an increased efficiency of RNA synthesis because of enhanced recycling. The chain is Probable DNA-directed RNA polymerase subunit delta from Pediococcus pentosaceus (strain ATCC 25745 / CCUG 21536 / LMG 10740 / 183-1w).